The primary structure comprises 234 residues: Large ribosomal subunit protein uL1 (234 aa).

Belongs to the universal ribosomal protein uL1 family. In terms of assembly, part of the 50S ribosomal subunit.

Functionally, binds directly to 23S rRNA. The L1 stalk is quite mobile in the ribosome, and is involved in E site tRNA release. Its function is as follows. Protein L1 is also a translational repressor protein, it controls the translation of the L11 operon by binding to its mRNA. This chain is Large ribosomal subunit protein uL1, found in Pseudoalteromonas translucida (strain TAC 125).